The sequence spans 360 residues: Phospho-N-acetylmuramoyl-pentapeptide-transferase (360 aa).

A run of 10 helical transmembrane segments spans residues 26–46 (AILG…KLIE), 74–94 (MGGL…GDLG), 97–117 (YVWV…IDDY), 132–152 (WKYI…YTTA), 168–188 (VMPQ…VGSS), 199–219 (GLAI…AYLS), 236–256 (SGEL…FLWF), 263–283 (VFMG…IAVL), 288–308 (ILLV…ILQV), and 338–358 (VIVR…ATLK).

It belongs to the glycosyltransferase 4 family. MraY subfamily. Mg(2+) is required as a cofactor.

The protein resides in the cell inner membrane. The enzyme catalyses UDP-N-acetyl-alpha-D-muramoyl-L-alanyl-gamma-D-glutamyl-meso-2,6-diaminopimeloyl-D-alanyl-D-alanine + di-trans,octa-cis-undecaprenyl phosphate = di-trans,octa-cis-undecaprenyl diphospho-N-acetyl-alpha-D-muramoyl-L-alanyl-D-glutamyl-meso-2,6-diaminopimeloyl-D-alanyl-D-alanine + UMP. The protein operates within cell wall biogenesis; peptidoglycan biosynthesis. In terms of biological role, catalyzes the initial step of the lipid cycle reactions in the biosynthesis of the cell wall peptidoglycan: transfers peptidoglycan precursor phospho-MurNAc-pentapeptide from UDP-MurNAc-pentapeptide onto the lipid carrier undecaprenyl phosphate, yielding undecaprenyl-pyrophosphoryl-MurNAc-pentapeptide, known as lipid I. The chain is Phospho-N-acetylmuramoyl-pentapeptide-transferase from Shewanella sp. (strain ANA-3).